The following is a 550-amino-acid chain: GMP synthase [glutamine-hydrolyzing] (550 aa).

In terms of domain architecture, Glutamine amidotransferase type-1 spans 39–232; that stretch reads RILILDFGSQ…VHKICGCGGL (194 aa). Catalysis depends on cysteine 116, which acts as the Nucleophile. Catalysis depends on residues histidine 206 and glutamate 208. Positions 233-425 constitute a GMPS ATP-PPase domain; the sequence is WTPEHIIDLR…LGLPHSMIYR (193 aa). An ATP-binding site is contributed by 260-266; the sequence is SGGVDSS.

Homodimer.

The catalysed reaction is XMP + L-glutamine + ATP + H2O = GMP + L-glutamate + AMP + diphosphate + 2 H(+). The protein operates within purine metabolism; GMP biosynthesis; GMP from XMP (L-Gln route): step 1/1. In terms of biological role, catalyzes the synthesis of GMP from XMP. In Acinetobacter baylyi (strain ATCC 33305 / BD413 / ADP1), this protein is GMP synthase [glutamine-hydrolyzing].